We begin with the raw amino-acid sequence, 248 residues long: Serine/arginine-rich splicing factor 1 (248 aa).

Ser-2 carries the post-translational modification N-acetylserine. Ser-2 carries the post-translational modification Phosphoserine. An RRM 1 domain is found at 16 to 91 (CRIYVGNLPP…YRLRVEFPRS (76 aa)). Lys-30 participates in a covalent cross-link: Glycyl lysine isopeptide (Lys-Gly) (interchain with G-Cter in SUMO2). An N6-acetyllysine; alternate modification is found at Lys-38. Residue Lys-38 forms a Glycyl lysine isopeptide (Lys-Gly) (interchain with G-Cter in SUMO2); alternate linkage. Positions 88–134 (FPRSGRGTGRGGGGGGGGGAPRGRYGPPSRRSENRVVVSGLPPSGSW) are disordered. Residues Arg-93, Arg-97, and Arg-109 each carry the asymmetric dimethylarginine; alternate modification. Arg-93, Arg-97, and Arg-109 each carry omega-N-methylarginine; alternate. The span at 93-108 (RGTGRGGGGGGGGGAP) shows a compositional bias: gly residues. The residue at position 111 (Arg-111) is an Omega-N-methylarginine. The RRM 2 domain maps to 121–195 (NRVVVSGLPP…ETAYIRVKVD (75 aa)). Ser-133 carries the post-translational modification Phosphoserine. Lys-179 is modified (N6-acetyllysine). The tract at residues 191-248 (RVKVDGPRSPSYGRSRSRSRSRSRSRSRSNSRSRSYSPRRSRGSPRYSPRHSRSRSRT) is disordered. The segment at 198–247 (RSPSYGRSRSRSRSRSRSRSRSNSRSRSYSPRRSRGSPRYSPRHSRSRSR) is interaction with SAFB1. Residues Ser-199 and Ser-201 each carry the phosphoserine modification. At Tyr-202 the chain carries Phosphotyrosine. 6 positions are modified to phosphoserine: Ser-205, Ser-207, Ser-209, Ser-231, Ser-234, and Ser-238. A compositionally biased stretch (basic residues) spans 205–248 (SRSRSRSRSRSRSRSNSRSRSYSPRRSRGSPRYSPRHSRSRSRT).

Belongs to the splicing factor SR family. In terms of assembly, consists of two polypeptides of p32 and p33. Identified in the spliceosome C complex. Component of a ribonucleoprotein complex containing mRNAs and RNA-binding proteins including DDX5, HNRNPH2 and SRSF1 as well as splicing regulator ARVCF. In vitro, self-associates and binds SRSF2, SNRNP70 and U2AF1 but not U2AF2. Binds SREK1/SFRS12. Interacts with SAFB/SAFB1. Interacts with PSIP1/LEDGF. Interacts with RSRC1 (via Arg/Ser-rich domain). Interacts with ZRSR2/U2AF1-RS2. Interacts with CCDC55 (via C-terminus). Interacts with SRPK1 and a sliding docking interaction is essential for its sequential and processive phosphorylation by SRPK1. Interacts with NXF1. Interacts with CCNL1, CCNL2 and CDK11B. Interacts with RRP1B. Interacts (when phosphorylated in its RS domain) with TNPO3; promoting nuclear import. Interacts with ILDR1 (via C-terminus) and ILDR2. In terms of processing, phosphorylated by CLK1, CLK2, CLK3 and CLK4. Phosphorylated by SRPK1 at multiple serines in its RS domain via a directional (C-terminal to N-terminal) and a dual-track mechanism incorporating both processive phosphorylation (in which the kinase stays attached to the substrate after each round of phosphorylation) and distributive phosphorylation steps (in which the kinase and substrate dissociate after each phosphorylation event). The RS domain of SRSF1 binds to a docking groove in the large lobe of the kinase domain of SRPK1 and this induces certain structural changes in SRPK1 and/or RRM 2 domain of SRSF1, allowing RRM 2 to bind the kinase and initiate phosphorylation. The cycles continue for several phosphorylation steps in a processive manner (steps 1-8) until the last few phosphorylation steps (approximately steps 9-12). During that time, a mechanical stress induces the unfolding of the beta-4 motif in RRM 2, which then docks at the docking groove of SRPK1. This also signals RRM 2 to begin to dissociate, which facilitates SRSF1 dissociation after phosphorylation is completed. Asymmetrically dimethylated at arginines, probably by PRMT1, methylation promotes localization to nuclear speckles.

It localises to the cytoplasm. The protein resides in the nucleus speckle. Functionally, plays a role in preventing exon skipping, ensuring the accuracy of splicing and regulating alternative splicing. Interacts with other spliceosomal components, via the RS domains, to form a bridge between the 5'- and 3'-splice site binding components, U1 snRNP and U2AF. Can stimulate binding of U1 snRNP to a 5'-splice site-containing pre-mRNA. Binds to purine-rich RNA sequences, either the octamer, 5'-RGAAGAAC-3' (r=A or G) or the decamers, AGGACAGAGC/AGGACGAAGC. Binds preferentially to the 5'-CGAGGCG-3' motif in vitro. Three copies of the octamer constitute a powerful splicing enhancer in vitro, the ASF/SF2 splicing enhancer (ASE) which can specifically activate ASE-dependent splicing. May function as export adapter involved in mRNA nuclear export through the TAP/NXF1 pathway. The chain is Serine/arginine-rich splicing factor 1 (SRSF1) from Bos taurus (Bovine).